Consider the following 353-residue polypeptide: Putative transport protein YrrI (353 aa).

Helical transmembrane passes span 8–28 (LLLW…FFML), 37–57 (LVIK…YLLL), 77–97 (IYVL…PVLI), 165–185 (FLIA…IELM), 220–240 (LLVC…FGLP), 243–263 (LILG…PFIG), 269–289 (LIAM…VFIL), and 311–331 (VVIM…GMIL).

This sequence belongs to the autoinducer-2 exporter (AI-2E) (TC 2.A.86) family.

It is found in the cell membrane. This chain is Putative transport protein YrrI (yrrI), found in Bacillus subtilis (strain 168).